Consider the following 374-residue polypeptide: Putative phosphoserine aminotransferase (374 aa).

Residue arginine 48 coordinates L-glutamate. Pyridoxal 5'-phosphate is bound by residues 82–83, phenylalanine 106, threonine 152, aspartate 174, and glutamine 197; that span reads AT. Lysine 198 is subject to N6-(pyridoxal phosphate)lysine. 249 to 250 is a pyridoxal 5'-phosphate binding site; sequence NT.

This sequence belongs to the class-V pyridoxal-phosphate-dependent aminotransferase family. SerC subfamily. Homodimer. It depends on pyridoxal 5'-phosphate as a cofactor.

The protein localises to the cytoplasm. It catalyses the reaction O-phospho-L-serine + 2-oxoglutarate = 3-phosphooxypyruvate + L-glutamate. It carries out the reaction 4-(phosphooxy)-L-threonine + 2-oxoglutarate = (R)-3-hydroxy-2-oxo-4-phosphooxybutanoate + L-glutamate. Its pathway is amino-acid biosynthesis; L-serine biosynthesis; L-serine from 3-phospho-D-glycerate: step 2/3. The protein operates within cofactor biosynthesis; pyridoxine 5'-phosphate biosynthesis; pyridoxine 5'-phosphate from D-erythrose 4-phosphate: step 3/5. Functionally, catalyzes the reversible conversion of 3-phosphohydroxypyruvate to phosphoserine and of 3-hydroxy-2-oxo-4-phosphonooxybutanoate to phosphohydroxythreonine. This chain is Putative phosphoserine aminotransferase, found in Mycobacterium avium (strain 104).